Reading from the N-terminus, the 359-residue chain is Trans-enoyl reductase mpsG (359 aa).

NADP(+)-binding residues include Y212, L259, and T278.

Belongs to the zinc-containing alcohol dehydrogenase family. As to quaternary structure, monomer.

It functions in the pathway secondary metabolite biosynthesis. Its function is as follows. Trans-enoyl reductase; part of the gene cluster that mediates the biosynthesis of macrophasetins, 3-decalinoyltetramic acids (DTAs) which feature a tetramate (pyrrolidine-2,4-dione) unit connected to a decalin fragment and that have potent bioactivities. The PKS-NRPS mpsA together with its associated enoylreductase partner mpsG incorporate one unit of acetyl-CoA, seven units of malonyl-CoA, and one unit of L-alanine to assemble the linear tetramic acid intermediate corresponding to the backbone of macrophasetins. Without the Diels-Alderase mpsD, the mpsA/G product can undergo the non-enzymatic intramolecular Diels-Alder (IMDA) reaction to generate both macrophasetin A and macrophasetin B. Catalyzed by mpsD, the linear tetramic acid intermediate is thoroughly converted to macrophasetin A via the endo-IMDA reaction in a regioselective and stereoselective manner. Finally, the cytochrome P450 monooxygenase mpsF catalyzes the hydroxylation at C20 to yield the end product macrophasetin C. This is Trans-enoyl reductase mpsG from Macrophomina phaseolina (strain MS6) (Charcoal rot fungus).